Reading from the N-terminus, the 131-residue chain is Methyl-coenzyme M reductase operon protein D (131 aa).

As to quaternary structure, MCR is composed of three subunits: alpha, beta, and gamma. The function of proteins C and D is not known.

The chain is Methyl-coenzyme M reductase operon protein D (mcrD) from Methanothermus fervidus.